The sequence spans 256 residues: 2,3,4,5-tetrahydropyridine-2,6-dicarboxylate N-acetyltransferase (256 aa).

It belongs to the transferase hexapeptide repeat family. DapH subfamily.

It carries out the reaction (S)-2,3,4,5-tetrahydrodipicolinate + acetyl-CoA + H2O = L-2-acetamido-6-oxoheptanedioate + CoA. It participates in amino-acid biosynthesis; L-lysine biosynthesis via DAP pathway; LL-2,6-diaminopimelate from (S)-tetrahydrodipicolinate (acetylase route): step 1/3. Its function is as follows. Catalyzes the transfer of an acetyl group from acetyl-CoA to tetrahydrodipicolinate. The chain is 2,3,4,5-tetrahydropyridine-2,6-dicarboxylate N-acetyltransferase from Lactococcus lactis subsp. cremoris (strain MG1363).